A 441-amino-acid chain; its full sequence is Methylenetetrahydrofolate--tRNA-(uracil-5-)-methyltransferase TrmFO (441 aa).

11-16 lines the FAD pocket; sequence GGGLAG.

Belongs to the MnmG family. TrmFO subfamily. FAD serves as cofactor.

Its subcellular location is the cytoplasm. The enzyme catalyses uridine(54) in tRNA + (6R)-5,10-methylene-5,6,7,8-tetrahydrofolate + NADH + H(+) = 5-methyluridine(54) in tRNA + (6S)-5,6,7,8-tetrahydrofolate + NAD(+). It catalyses the reaction uridine(54) in tRNA + (6R)-5,10-methylene-5,6,7,8-tetrahydrofolate + NADPH + H(+) = 5-methyluridine(54) in tRNA + (6S)-5,6,7,8-tetrahydrofolate + NADP(+). Catalyzes the folate-dependent formation of 5-methyl-uridine at position 54 (M-5-U54) in all tRNAs. The sequence is that of Methylenetetrahydrofolate--tRNA-(uracil-5-)-methyltransferase TrmFO from Syntrophus aciditrophicus (strain SB).